The chain runs to 1187 residues: DENN domain and WD repeat-containing protein SCD1 (1187 aa).

Residues 19-179 form the uDENN domain; sequence TVDGDLGFHG…NVPLPTPGKD (161 aa). In terms of domain architecture, cDENN spans 199-330; it reads SLPQADISLQ…EFSTLRNDIL (132 aa). In terms of domain architecture, dDENN spans 332-437; that stretch reads LLHPNVVAID…ERRLSSDEKS (106 aa). Disordered regions lie at residues 508–536 and 765–793; these read SGAL…SSME and SAGL…GRSW. Basic and acidic residues predominate over residues 526-536; it reads NTKEDNFSSME. The segment covering 779 to 793 has biased composition (polar residues); sequence SDETQQPSEASGRSW. 8 WD repeats span residues 841-892, 897-934, 937-975, 978-1017, 1020-1057, 1060-1099, 1104-1141, and 1152-1187; these read GHGG…SELR, GHTG…LLEE, GHDS…CVAT, RCSS…QMHK, GHTK…CDAV, CHAG…IKCV, LHSS…GTKV, and RTAA…TINI.

Interacts with FLS2. As to expression, expressed in roots, rosette and cauline leaves, buds and flowers.

The protein resides in the cell membrane. The protein localises to the cytoplasmic vesicle. It localises to the clathrin-coated vesicle. Involved in growth and development through its role in cytokinesis and polarized cell expansion. Required for plasma membrane internalization. May function in clathrin-mediated membrane trafficking, including plasma membrane endocytosis, essential to both cytokinesis and cell expansion. Acts as a negative regulator of basal resistance against bacteria. The protein is DENN domain and WD repeat-containing protein SCD1 of Arabidopsis thaliana (Mouse-ear cress).